Consider the following 374-residue polypeptide: Ribosomal RNA large subunit methyltransferase G (374 aa).

The protein belongs to the methyltransferase superfamily. RlmG family.

It localises to the cytoplasm. It carries out the reaction guanosine(1835) in 23S rRNA + S-adenosyl-L-methionine = N(2)-methylguanosine(1835) in 23S rRNA + S-adenosyl-L-homocysteine + H(+). Functionally, specifically methylates the guanine in position 1835 (m2G1835) of 23S rRNA. This is Ribosomal RNA large subunit methyltransferase G from Pseudomonas aeruginosa (strain ATCC 15692 / DSM 22644 / CIP 104116 / JCM 14847 / LMG 12228 / 1C / PRS 101 / PAO1).